A 274-amino-acid chain; its full sequence is Glycerol uptake facilitator protein (274 aa).

2 helical membrane passes run 3 to 23 and 38 to 58; these read AFWG…GVCA and IVVV…VGGI. The NPA 1 motif lies at 64–66; sequence NPA. The next 3 membrane-spanning stretches (helical) occupy residues 82–102, 131–151, and 164–184; these read VPVY…IIYL, FANV…ILAI, and IVGF…GYAI. Positions 185 to 187 match the NPA 2 motif; the sequence is NPA. The helical transmembrane segment at 238-258 threads the bilayer; it reads ITSSFWIVSVILVVVLLGLYV.

This sequence belongs to the MIP/aquaporin (TC 1.A.8) family.

It is found in the cell membrane. It catalyses the reaction glycerol(in) = glycerol(out). In terms of biological role, mediates glycerol diffusion across the cytoplasmic membrane via a pore-type mechanism. This is Glycerol uptake facilitator protein (glpF) from Bacillus subtilis (strain 168).